The primary structure comprises 919 residues: WD repeat-containing protein 47 (919 aa).

Residues 10 to 42 form the LisH domain; that stretch reads KEVEIIKLILDFLNSKKLHISMLALEKESGVIN. A CTLH domain is found at 45 to 102; it reads FSDDMLFLRQLILDGQWDEVLQFIQPLECMEKFDKKRFRYIILKQKFLEALCVNNAMS. At Thr285 the chain carries Phosphothreonine. Phosphoserine occurs at positions 289, 292, 297, and 312. Residues 393-421 are disordered; it reads GQSSVSEKEPANGAQNPGPAKQEKNELRD. Ser422 is modified (phosphoserine). Residues 500–590 are disordered; the sequence is LNQQCNGSKG…SLSRSKGEED (91 aa). Residues 517–551 are compositionally biased toward polar residues; sequence VTSFTTPPQDSSQRLTHDASNIHTSTPRNPGSTNH. Thr542 is subject to Phosphothreonine. 7 WD repeats span residues 604–643, 659–698, 706–748, 753–791, 798–837, 840–879, and 886–918; these read EDTQ…DPSA, HHKG…CNAT, MHDG…GQGL, GHTG…CVRV, GTGS…MVQS, PHSS…TKQL, and EHKD…WTYN.

In terms of assembly, interacts with MAP1S (via WD repeats).

It is found in the cytoplasm. The protein resides in the cytoskeleton. The protein is WD repeat-containing protein 47 (WDR47) of Homo sapiens (Human).